A 188-amino-acid chain; its full sequence is Large ribosomal subunit protein eL18 (188 aa).

A Glycyl lysine isopeptide (Lys-Gly) (interchain with G-Cter in SUMO2) cross-link involves residue K119. At S130 the chain carries Phosphoserine. Positions 150–188 are disordered; sequence RHFGKAPRTPHSHTKPYVRSKGRKFERARGRWASRGYKN. Composition is skewed to basic residues over residues 151–171 and 179–188; these read HFGK…RSKG and GRWASRGYKN. The residue at position 158 (T158) is a Phosphothreonine. Residue K164 forms a Glycyl lysine isopeptide (Lys-Gly) (interchain with G-Cter in SUMO2) linkage.

Belongs to the eukaryotic ribosomal protein eL18 family. As to quaternary structure, component of the large ribosomal subunit.

It localises to the cytoplasm. The protein localises to the cytosol. The protein resides in the rough endoplasmic reticulum. Component of the large ribosomal subunit. The ribosome is a large ribonucleoprotein complex responsible for the synthesis of proteins in the cell. This is Large ribosomal subunit protein eL18 (RPL18) from Oryctolagus cuniculus (Rabbit).